Here is a 417-residue protein sequence, read N- to C-terminus: NADH-quinone oxidoreductase subunit D (417 aa).

This sequence belongs to the complex I 49 kDa subunit family. In terms of assembly, NDH-1 is composed of 14 different subunits. Subunits NuoB, C, D, E, F, and G constitute the peripheral sector of the complex.

The protein resides in the cell inner membrane. The catalysed reaction is a quinone + NADH + 5 H(+)(in) = a quinol + NAD(+) + 4 H(+)(out). NDH-1 shuttles electrons from NADH, via FMN and iron-sulfur (Fe-S) centers, to quinones in the respiratory chain. The immediate electron acceptor for the enzyme in this species is believed to be ubiquinone. Couples the redox reaction to proton translocation (for every two electrons transferred, four hydrogen ions are translocated across the cytoplasmic membrane), and thus conserves the redox energy in a proton gradient. The protein is NADH-quinone oxidoreductase subunit D of Nitrosomonas eutropha (strain DSM 101675 / C91 / Nm57).